The sequence spans 334 residues: Phospholipase A1 2 (334 aa).

An N-terminal signal peptide occupies residues 1–23; that stretch reads MMNLKYLLFFCLVQALHYCYAYG. A propeptide spanning residues 24–33 is cleaved from the precursor; that stretch reads DPSLSNELDR. Residues Cys37 and Cys120 are joined by a disulfide bond. Ser170 (nucleophile) is an active-site residue. The active-site Charge relay system is Asp198. Intrachain disulfides connect Cys209-Cys214 and Cys252-Cys261. Residue His263 is the Charge relay system of the active site. Cystine bridges form between Cys278–Cys302, Cys279–Cys327, and Cys295–Cys300.

The protein belongs to the AB hydrolase superfamily. Lipase family. In terms of processing, not glycosylated. Expressed by the venom gland.

The protein resides in the secreted. It catalyses the reaction a 1,2-diacyl-sn-glycero-3-phosphocholine + H2O = a 2-acyl-sn-glycero-3-phosphocholine + a fatty acid + H(+). Functionally, catalyzes the hydrolysis of phosphatidylcholine with phospholipase A1 activity (6.3 U/ml). May act as an allergen and induce hemolytic activity. This is Phospholipase A1 2 from Vespa affinis (Lesser banded hornet).